Consider the following 681-residue polypeptide: Peroxisomal acyl-coenzyme A oxidase 2 (681 aa).

Ser-3 and Ser-9 each carry phosphoserine. Thr-13 is subject to Phosphothreonine. N6-succinyllysine is present on residues Lys-66, Lys-137, Lys-453, and Lys-561. The Microbody targeting signal motif lies at 679-681 (SKL).

The protein belongs to the acyl-CoA oxidase family. As to quaternary structure, homodimer. The cofactor is FAD. In terms of tissue distribution, present in all tissues tested: heart, brain, placenta, lung, liver, skeletal muscle, kidney and pancreas. Most abundant in heart, liver and kidney.

Its subcellular location is the peroxisome. It catalyses the reaction (25R)-3alpha,7alpha,12alpha-trihydroxy-5beta-cholestan-26-oyl-CoA + A + H2O = (24R,25R)-3alpha,7alpha,12alpha,24-tetrahydroxy-5beta-cholestan-26-oyl-CoA + AH2. It carries out the reaction (25S)-3alpha,7alpha,12alpha-trihydroxy-5beta-cholestan-26-oyl-CoA + O2 = (24E)-3alpha,7alpha,12alpha-trihydroxy-5beta-cholest-24-en-26-oyl-CoA + H2O2. In terms of biological role, oxidizes the CoA esters of the bile acid intermediates di- and tri-hydroxycholestanoic acids. Capable of oxidizing short as well as long chain 2-methyl branched fatty acids. This is Peroxisomal acyl-coenzyme A oxidase 2 from Homo sapiens (Human).